The primary structure comprises 906 residues: MLNANKSIIRLATYSIRNRIHHLRTLHSLNYINSRINIQDTNHIRPTCPCGSKQFMLESELDSALIEFLDNDDPFSDSEIKESDDLSKGQSHVYNGSPVTKNSILQIEKQQIQKSPRPTETNKRMQIRKDPDQNDNVDDDSLSSTFEFSDMDDDFMEALKAAEEITGNNTNCIKRTASTPLKKPIAKSMKNSSTPSKSAGKKYCKYIKTSSPSPSHYLIRESGSGVDILEGSPNKVQADNASPFRITSSFSSPSQIQNQGVGANPGPKSKAEQNVSSASQSSSPPMTVSQVRNPFKVPTQFRRNYSTRPITNQGSDTKKGNSHHTILLATQKPGVPFSNPSDRSYHKLEKTEGINEAQSEAKNVKPIILSNEQEYVLKQVLSGVSLFYTGSAGTGKSVLLRSIIKSLRDKYPKGVAVTASTGLAACNIGGITLHSFAGFGLGQGKVENLIKKIKRNKKAFTRWRETRVLIIDEISMVDGHLLNKLNEIAKNLRRNNRPFGGIQLVACGDFYQLPPVVKKTAHDGTELDDVEVFFAFESSAWKETIQRTITLKEIFRQKGDQRFINMLNNLRDGNVPDDTARDFCRLSRPLKCPEGIVPSELYATRYEVDMANSRKLNTIQGDVVVYNSVDTGILPEPQKTQVLTNFLAPQVLNLKVGAQVMCIKNFDDQLVNGTLGKVIDFVDRDTYMKSESKENPSTETSDEVSGLNDYIFNDFQKPKKVVKEDAPIAEQVLFTGQLSQKVEEESESSKRKSKLKDDLMKDYKNKKYPLVKFLLPDGITFRTVVVEPEQWTTEDEDGTVLVSRIQFPLILAWSLSIHKSQGQTLSKVVVDMKKIFENGQAYVALSRAVSRAGLQVLNFNRSKVASHRKVIEFYKNLSSHEKESRSGQQRLNFMQTSVKSVARAQI.

Disordered stretches follow at residues 77-146 (DSEI…SSTF) and 229-297 (LEGS…PFKV). Positions 78–87 (SEIKESDDLS) are enriched in basic and acidic residues. Residues 88-119 (KGQSHVYNGSPVTKNSILQIEKQQIQKSPRPT) are compositionally biased toward polar residues. Positions 120 to 132 (ETNKRMQIRKDPD) are enriched in basic and acidic residues. Residues 234-261 (NKVQADNASPFRITSSFSSPSQIQNQGV) are compositionally biased toward polar residues. Residues 273–291 (QNVSSASQSSSPPMTVSQV) show a composition bias toward low complexity. 390 to 397 (GSAGTGKS) provides a ligand contact to ATP. A DNA-binding region spans residues 840-859 (QAYVALSRAVSRAGLQVLNF).

It belongs to the helicase family. PIF1 subfamily. Monomer. Interacts with telomerase. The cofactor is Mg(2+).

Its subcellular location is the nucleus. The protein resides in the mitochondrion. The catalysed reaction is Couples ATP hydrolysis with the unwinding of duplex DNA at the replication fork by translocating in the 5'-3' direction. This creates two antiparallel DNA single strands (ssDNA). The leading ssDNA polymer is the template for DNA polymerase III holoenzyme which synthesizes a continuous strand.. The enzyme catalyses ATP + H2O = ADP + phosphate + H(+). Its function is as follows. DNA-dependent ATPase and 5'-3' DNA helicase required for the maintenance of both mitochondrial and nuclear genome stability. Efficiently unwinds G-quadruplex (G4) DNA structures and forked RNA-DNA hybrids. Resolves G4 structures, preventing replication pausing and double-strand breaks (DSBs) at G4 motifs. Involved in the maintenance of telomeric DNA. Inhibits telomere elongation, de novo telomere formation and telomere addition to DSBs via catalytic inhibition of telomerase. Reduces the processivity of telomerase by displacing active telomerase from DNA ends. Releases telomerase by unwinding the short telomerase RNA/telomeric DNA hybrid that is the intermediate in the telomerase reaction. Involved in the maintenance of ribosomal (rDNA). Required for efficient fork arrest at the replication fork barrier within rDNA. Involved in the maintenance of mitochondrial (mtDNA). Required to maintain mtDNA under conditions that introduce dsDNA breaks in mtDNA, either preventing or repairing dsDNA breaks. May inhibit replication progression to allow time for repair. May have a general role in chromosomal replication by affecting Okazaki fragment maturation. May have a role in conjunction with DNA2 helicase/nuclease in 5'-flap extension during Okazaki fragment processing. The sequence is that of ATP-dependent DNA helicase PIF1 from Candida albicans (strain SC5314 / ATCC MYA-2876) (Yeast).